The sequence spans 375 residues: Alpha-2,8-sialyltransferase 8B (375 aa).

The Cytoplasmic segment spans residues Met-1–Arg-6. The chain crosses the membrane as a helical; Signal-anchor for type II membrane protein span at residues Ser-7 to Ala-23. The Lumenal segment spans residues Asp-24 to Thr-375. Asn-60, Asn-72, Asn-89, and Asn-134 each carry an N-linked (GlcNAc...) asparagine glycan. Intrachain disulfides connect Cys-157/Cys-307 and Cys-171/Cys-371. Asn-162 and Asn-185 together coordinate CMP-N-acetyl-beta-neuraminate. N-linked (GlcNAc...) asparagine glycans are attached at residues Asn-219 and Asn-234. The CMP-N-acetyl-beta-neuraminate site is built by Thr-294, Thr-295, Gly-296, Trp-316, Tyr-329, and His-330. Residue His-346 is the Proton donor/acceptor of the active site.

It belongs to the glycosyltransferase 29 family. Post-translationally, autopolysialylated. Autopolysialylation is not a prerequisite for the polysialylation acitity, but enhances the polysialylation acitity.

It is found in the golgi apparatus membrane. Its subcellular location is the secreted. The protein localises to the cell membrane. The enzyme catalyses [N-acetyl-alpha-D-neuraminosyl-(2-&gt;8)](n) + CMP-N-acetyl-beta-neuraminate = [N-acetyl-alpha-D-neuraminosyl-(2-&gt;8)](n+1) + CMP + H(+). The protein operates within protein modification; protein glycosylation. Catalyzes the transfer of a sialic acid from a CMP-linked sialic acid donor onto a terminal alpha-2,3-, alpha-2,6-, or alpha-2,8-linked sialic acid of an N-linked glycan acceptor through alpha-2,8-linkages. Therefore, participates in polysialic acid synthesis on various sialylated N-acetyllactosaminyl oligosaccharides (alpha-2,3-, alpha-2,6-, or alpha-2,8-linked sialic acid), including NCAM1, NCAM1 N-glycans, FETUB N-glycans, and to a lesser extent sialylparagloboside (SPG) and AHSG, which does not require the initial addition of an alpha 2,8-sialic acid. However, does not exhibit sialic acid-polymerase activity. Catalyzes polysialic acid synthesis in the hippocampal on NCAM1 and supports neurite outgrowth. ST8SIA2-mediated polysialylation influences on oligodendrocyte differentiation and may promote the integrity of myelin and axons. The sequence is that of Alpha-2,8-sialyltransferase 8B from Pan troglodytes (Chimpanzee).